Here is a 237-residue protein sequence, read N- to C-terminus: 1-(5-phosphoribosyl)-5-[(5-phosphoribosylamino)methylideneamino] imidazole-4-carboxamide isomerase (237 aa).

The active-site Proton acceptor is D8. The active-site Proton donor is the D130.

It belongs to the HisA/HisF family.

Its subcellular location is the cytoplasm. It carries out the reaction 1-(5-phospho-beta-D-ribosyl)-5-[(5-phospho-beta-D-ribosylamino)methylideneamino]imidazole-4-carboxamide = 5-[(5-phospho-1-deoxy-D-ribulos-1-ylimino)methylamino]-1-(5-phospho-beta-D-ribosyl)imidazole-4-carboxamide. It functions in the pathway amino-acid biosynthesis; L-histidine biosynthesis; L-histidine from 5-phospho-alpha-D-ribose 1-diphosphate: step 4/9. The chain is 1-(5-phosphoribosyl)-5-[(5-phosphoribosylamino)methylideneamino] imidazole-4-carboxamide isomerase from Caldicellulosiruptor saccharolyticus (strain ATCC 43494 / DSM 8903 / Tp8T 6331).